Consider the following 124-residue polypeptide: MRHYEIILLIHPDQSEQVPAMLERYKGLITAGGGKVHRVEDWGRRQLAYQINKLSKAHYLCVNIEAEQTVMGELEHAFKFNDAVLRHLTVQKKKAETGPSSMMKTVEREEARKAQQAEYAANNS.

A disordered region spans residues 93-124; that stretch reads KKAETGPSSMMKTVEREEARKAQQAEYAANNS. The span at 105 to 115 shows a compositional bias: basic and acidic residues; sequence TVEREEARKAQ.

This sequence belongs to the bacterial ribosomal protein bS6 family.

Its function is as follows. Binds together with bS18 to 16S ribosomal RNA. The chain is Small ribosomal subunit protein bS6 from Variovorax paradoxus (strain S110).